Here is a 78-residue protein sequence, read N- to C-terminus: Large ribosomal subunit protein bL28 (78 aa).

Belongs to the bacterial ribosomal protein bL28 family.

The polypeptide is Large ribosomal subunit protein bL28 (Methylobacillus flagellatus (strain ATCC 51484 / DSM 6875 / VKM B-1610 / KT)).